A 465-amino-acid polypeptide reads, in one-letter code: Apolipoprotein N-acyltransferase (465 aa).

The next 6 helical transmembrane spans lie at 12-32 (AVLG…LSML), 49-69 (ALWG…LHPL), 80-100 (LPVA…LLLL), 122-142 (LLAL…LFWI), 161-181 (WLGS…LWQL), and 189-209 (CAWW…SLSP). The CN hydrolase domain maps to 221 to 448 (WQPAIPTREK…DAVAAAELQR (228 aa)). The Proton acceptor role is filled by E262. K312 is an active-site residue. Catalysis depends on C360, which acts as the Nucleophile.

It belongs to the CN hydrolase family. Apolipoprotein N-acyltransferase subfamily.

It localises to the cell inner membrane. The catalysed reaction is N-terminal S-1,2-diacyl-sn-glyceryl-L-cysteinyl-[lipoprotein] + a glycerophospholipid = N-acyl-S-1,2-diacyl-sn-glyceryl-L-cysteinyl-[lipoprotein] + a 2-acyl-sn-glycero-3-phospholipid + H(+). The protein operates within protein modification; lipoprotein biosynthesis (N-acyl transfer). Catalyzes the phospholipid dependent N-acylation of the N-terminal cysteine of apolipoprotein, the last step in lipoprotein maturation. The protein is Apolipoprotein N-acyltransferase of Parasynechococcus marenigrum (strain WH8102).